A 155-amino-acid polypeptide reads, in one-letter code: MADVPKREVENVEFVFEVMGSPGEGIDAVDLGDALRALNLNPTLALIEKLGGTKKRNEKKIKLDEFLPIYSQVKKEKEQGCYEDFIECLKLYDKEENGTMLLAELQHALLALGESLDDEQVETLFADCMDPEDDEGFIPYSQFVQRLMSDPVVFD.

EF-hand domains are found at residues 7–41 (REVE…LNLN) and 80–115 (GCYE…LGES).

As to quaternary structure, myosin is a hexamer of 2 heavy chains and 4 light chains. Indirect flight muscle isoform is found only in the indirect flight muscles. The larval and adult isoform is present in the larval and adult musculature.

This is Myosin light chain alkali (Mlc1) from Drosophila melanogaster (Fruit fly).